The primary structure comprises 259 residues: Gem-associated protein 2 (259 aa).

Belongs to the gemin-2 family. In terms of assembly, forms a stable heteromeric complex with survival of motor neuron protein (SMN), GEMIN3 and GEMIN4. The SMN complex is associated with the spliceosomal snRNAs U1 and U5 in the cytoplasm of oocytes.

It is found in the nucleus. The protein localises to the gem. It localises to the cytoplasm. Functionally, the SMN complex catalyzes the assembly of small nuclear ribonucleoproteins (snRNPs), the building blocks of the spliceosome, and thereby plays an important role in the splicing of cellular pre-mRNAs. Most spliceosomal snRNPs contain a common set of Sm proteins SNRPB, SNRPD1, SNRPD2, SNRPD3, SNRPE, SNRPF and SNRPG that assemble in a heptameric protein ring on the Sm site of the small nuclear RNA to form the core snRNP (Sm core). In the cytosol, the Sm proteins SNRPD1, SNRPD2, SNRPE, SNRPF and SNRPG (5Sm) are trapped in an inactive 6S pICln-Sm complex by the chaperone CLNS1A that controls the assembly of the core snRNP. To assemble core snRNPs, the SMN complex accepts the trapped 5Sm proteins from CLNS1A. Binding of snRNA inside 5Sm ultimately triggers eviction of the SMN complex, thereby allowing binding of SNRPD3 and SNRPB to complete assembly of the core snRNP. Within the SMN complex, GEMIN2 constrains the conformation of 5Sm, thereby promoting 5Sm binding to snRNA containing the snRNP code (a nonameric Sm site and a 3'-adjacent stem-loop), thus preventing progression of assembly until a cognate substrate is bound. The sequence is that of Gem-associated protein 2 (gemin2) from Xenopus laevis (African clawed frog).